A 248-amino-acid chain; its full sequence is 14-3-3 protein zeta (248 aa).

The protein belongs to the 14-3-3 family. As to quaternary structure, homodimer.

The protein resides in the cytoplasm. In terms of biological role, adapter protein implicated in the regulation of a large spectrum of both general and specialized signaling pathways. Binds to a large number of partners, usually by recognition of a phosphoserine or phosphothreonine motif. Binding generally results in the modulation of the activity of the binding partner. The polypeptide is 14-3-3 protein zeta (14-3-3zeta) (Aedes aegypti (Yellowfever mosquito)).